A 446-amino-acid polypeptide reads, in one-letter code: Solute carrier family 52, riboflavin transporter, member 2 (446 aa).

The next 4 helical transmembrane spans lie at 14–34 (LLVA…WVEL), 47–67 (LPSY…VVTL), 79–99 (APIQ…APLW), and 104–124 (VMAG…LALA). Asn-129 carries an N-linked (GlcNAc...) asparagine glycan. Transmembrane regions (helical) follow at residues 147–167 (FFLG…GQGV) and 196–216 (FFGA…GLLL). The segment at 228–267 (GSGTGLRGGAPGVEEEEEEEASPLQEPPSQAAGNTPSPDP) is disordered. Positions 229–238 (SGTGLRGGAP) are enriched in gly residues. The span at 254–263 (PPSQAAGNTP) shows a compositional bias: polar residues. A run of 5 helical transmembrane segments spans residues 278 to 298 (ACLL…LPAV), 313 to 333 (LAVV…MGIL), 340 to 360 (LGGL…LAIL), 367 to 387 (VGTS…LGVF), and 405 to 425 (ALLA…VTMF).

Belongs to the riboflavin transporter family.

The protein resides in the cell membrane. It carries out the reaction riboflavin(in) = riboflavin(out). With respect to regulation, riboflavin transport is Na(+)-independent but moderately pH-sensitive. Activity is strongly inhibited by riboflavin analogs, such as lumiflavin. Weakly inhibited by flavin adenine dinucleotide (FAD) and flavin mononucleotide (FMN). Plasma membrane transporter mediating the uptake by cells of the water soluble vitamin B2/riboflavin that plays a key role in biochemical oxidation-reduction reactions of the carbohydrate, lipid, and amino acid metabolism. May also act as a receptor for 4-hydroxybutyrate. Its function is as follows. (Microbial infection) In case of infection by porcine endogenous retrovirus (PERV-A), acts as a cell receptor to retroviral envelopes. The sequence is that of Solute carrier family 52, riboflavin transporter, member 2 (SLC52A2) from Sus scrofa (Pig).